A 172-amino-acid chain; its full sequence is Adenine phosphoribosyltransferase (172 aa).

It belongs to the purine/pyrimidine phosphoribosyltransferase family. As to quaternary structure, homodimer.

It localises to the cytoplasm. It catalyses the reaction AMP + diphosphate = 5-phospho-alpha-D-ribose 1-diphosphate + adenine. The protein operates within purine metabolism; AMP biosynthesis via salvage pathway; AMP from adenine: step 1/1. Its function is as follows. Catalyzes a salvage reaction resulting in the formation of AMP, that is energically less costly than de novo synthesis. This chain is Adenine phosphoribosyltransferase, found in Rippkaea orientalis (strain PCC 8801 / RF-1) (Cyanothece sp. (strain PCC 8801)).